Here is a 565-residue protein sequence, read N- to C-terminus: Sodium/hydrogen exchanger 9B1 (565 aa).

2 stretches are compositionally biased toward basic and acidic residues: residues 1-14 (MSEH…KDDG) and 23-86 (MSKD…ETQT). A disordered region spans residues 1–112 (MSEHDVESNK…RGTNSYCPPQ (112 aa)). Transmembrane regions (helical) follow at residues 122 to 142 (GAAL…EVLP), 146 to 166 (LFGL…LEFI), 167 to 187 (KIPV…GFTI), 206 to 223 (ALRN…GLGL), 238 to 258 (LSFG…HFIM), 266 to 286 (FLLG…NMLM), 311 to 331 (IVAI…GSVI), 341 to 361 (VLIG…FPSG), 371 to 391 (AFLV…IGLH), 419 to 439 (IVAN…GTEV), 449 to 469 (IGMC…STFV), 482 to 502 (VFIA…GPLA), and 523 to 543 (VAFL…GILG).

Belongs to the monovalent cation:proton antiporter 1 (CPA1) transporter (TC 2.A.36) family. As to expression, testis-specific. Expressed in the spermatids and spermatozoa (at protein level). Specifically present in the principal piece of sperm tail (at protein level).

It is found in the cell projection. The protein resides in the cilium. It localises to the flagellum membrane. Its function is as follows. Sperm-specific Na(+)/H(+) exchanger involved in intracellular pH regulation of spermatozoa. Involved in sperm motility and fertility. In Mus musculus (Mouse), this protein is Sodium/hydrogen exchanger 9B1.